Reading from the N-terminus, the 310-residue chain is Glutaminase 1 (310 aa).

Positions 66, 117, 161, 168, 192, 244, and 262 each coordinate substrate. Residue Lys-294 is modified to N6-acetyllysine.

Belongs to the glutaminase family. Homotetramer.

The catalysed reaction is L-glutamine + H2O = L-glutamate + NH4(+). The polypeptide is Glutaminase 1 (Shigella flexneri).